Reading from the N-terminus, the 122-residue chain is MVQQESRLKVADNTGAKEVLAIRVLGGTKKRYASVGDKIVVSVKEATPNGSIKKGAVSTAVVVRTRKEVRRPDGSYIRFDDNACVLLGPQGEMRGTRVFGPVARELRDKQFMKIVSLAPEVL.

This sequence belongs to the universal ribosomal protein uL14 family. Part of the 50S ribosomal subunit. Forms a cluster with proteins L3 and L19. In the 70S ribosome, L14 and L19 interact and together make contacts with the 16S rRNA in bridges B5 and B8.

Functionally, binds to 23S rRNA. Forms part of two intersubunit bridges in the 70S ribosome. The protein is Large ribosomal subunit protein uL14 of Christiangramia forsetii (strain DSM 17595 / CGMCC 1.15422 / KT0803) (Gramella forsetii).